A 180-amino-acid polypeptide reads, in one-letter code: MSRLKKLYTEEIRKSLQEKFGYTNTMQIPVLKKIVISMGLAEAAKDKNLFQAHLEELSMISGQKPLVTKARNSIAGFKLREGQGIGAKVTLRGERMYDFMDRFCNIVSPRIRDFRGFSKKGDGRGCYSLGLEDQQIFPEVDLDRVKRTQGMNITWVTTAQTDAECTTLLELMGLRFKKAQ.

Belongs to the universal ribosomal protein uL5 family. In terms of assembly, part of the 50S ribosomal subunit; part of the 5S rRNA/L5/L18/L25 subcomplex. Contacts the 5S rRNA and the P site tRNA. Forms a bridge to the 30S subunit in the 70S ribosome.

In terms of biological role, this is one of the proteins that bind and probably mediate the attachment of the 5S RNA into the large ribosomal subunit, where it forms part of the central protuberance. In the 70S ribosome it contacts protein S13 of the 30S subunit (bridge B1b), connecting the 2 subunits; this bridge is implicated in subunit movement. Contacts the P site tRNA; the 5S rRNA and some of its associated proteins might help stabilize positioning of ribosome-bound tRNAs. In Chlamydia felis (strain Fe/C-56) (Chlamydophila felis), this protein is Large ribosomal subunit protein uL5.